The primary structure comprises 323 residues: Transcription factor MafB (323 aa).

K32 participates in a covalent cross-link: Glycyl lysine isopeptide (Lys-Gly) (interchain with G-Cter in SUMO). Residues 34-43 show a composition bias toward basic and acidic residues; that stretch reads EPLGRAERPG. Disordered stretches follow at residues 34–78 and 116–210; these read EPLG…PTEP and PVPQ…VEDR. Over residues 54 to 77 the composition is skewed to low complexity; the sequence is SVSSTPLSTPCSSVPSSPSFSPTE. Basic residues-rich tracts occupy residues 129 to 143 and 159 to 168; these read SAHH…HPHH and AHPHHHHHHQ. A compositionally biased stretch (low complexity) spans 192-201; the sequence is PHATAAATAA. Residues 238–263 are basic motif; sequence RLKQKRRTLKNRGYAQSCRYKRVQQK. The region spanning 238 to 301 is the bZIP domain; that stretch reads RLKQKRRTLK…DAYKVKCEKL (64 aa). Residues 266–287 are leucine-zipper; the sequence is LENEKTQLIQQVEQLKQEVSRL. K297 is covalently cross-linked (Glycyl lysine isopeptide (Lys-Gly) (interchain with G-Cter in SUMO)).

This sequence belongs to the bZIP family. Maf subfamily. Homodimer or heterodimer with other bHLH-Zip transcription factors. Forms homodimers and heterodimers with FOS, FOSB and FOSL2, but not with JUN proteins (JUN, JUNB and JUND). Interacts with the intracellular cytoplasmic domain of LRP1 (LRPICD); the interaction results in a moderate reduction of MAFB transcriptional potential. Binds DNA as a homodimer or a heterodimer. Interacts with PAX6; the interaction is direct. Interacts with ETS1 and LRP1. In terms of processing, sumoylated. Sumoylation on Lys-32 and Lys-297 stimulates its transcriptional repression activity and promotes macrophage differentiation from myeloid progenitors. Expressed in pancreatic alpha-cells (glucagon-positive cells), in podocytes of the kidney and macrophages (at protein level). Most abundant in kidney, gut, lung and brain.

Its subcellular location is the nucleus. In terms of biological role, acts as a transcriptional activator or repressor. Plays a pivotal role in regulating lineage-specific hematopoiesis by repressing ETS1-mediated transcription of erythroid-specific genes in myeloid cells. Required for monocytic, macrophage, osteoclast, podocyte and islet beta cell differentiation. Involved in renal tubule survival and F4/80 maturation. Activates the insulin and glucagon promoters. Together with PAX6, transactivates weakly the glucagon gene promoter through the G1 element. SUMO modification controls its transcriptional activity and ability to specify macrophage fate. Binds element G1 on the glucagon promoter. Involved either as an oncogene or as a tumor suppressor, depending on the cell context. Required for the transcriptional activation of HOXB3 in the rhombomere r5 in the hindbrain. This Mus musculus (Mouse) protein is Transcription factor MafB (Mafb).